The following is a 358-amino-acid chain: Ion-translocating oxidoreductase complex subunit D (358 aa).

Transmembrane regions (helical) follow at residues 19–39 (IMLW…YYFG), 41–61 (GVVL…FIAI), 79–99 (LTAL…VIII), and 125–145 (IGYV…MPPI). The residue at position 186 (Thr186) is an FMN phosphoryl threonine. 5 consecutive transmembrane segments (helical) span residues 220 to 240 (FAQG…FLIL), 248 to 268 (IPVA…FTGF), 271 to 291 (LSAI…FIAT), 297 to 317 (SITP…VYLI), and 321 to 341 (GNYP…VPLI).

It belongs to the NqrB/RnfD family. The complex is composed of six subunits: RnfA, RnfB, RnfC, RnfD, RnfE and RnfG. FMN serves as cofactor.

Its subcellular location is the cell inner membrane. In terms of biological role, part of a membrane-bound complex that couples electron transfer with translocation of ions across the membrane. The polypeptide is Ion-translocating oxidoreductase complex subunit D (Haemophilus influenzae (strain PittGG)).